The primary structure comprises 240 residues: Phosphoribosylaminoimidazole-succinocarboxamide synthase (240 aa).

The protein belongs to the SAICAR synthetase family.

The catalysed reaction is 5-amino-1-(5-phospho-D-ribosyl)imidazole-4-carboxylate + L-aspartate + ATP = (2S)-2-[5-amino-1-(5-phospho-beta-D-ribosyl)imidazole-4-carboxamido]succinate + ADP + phosphate + 2 H(+). It participates in purine metabolism; IMP biosynthesis via de novo pathway; 5-amino-1-(5-phospho-D-ribosyl)imidazole-4-carboxamide from 5-amino-1-(5-phospho-D-ribosyl)imidazole-4-carboxylate: step 1/2. The chain is Phosphoribosylaminoimidazole-succinocarboxamide synthase from Coxiella burnetii (strain RSA 493 / Nine Mile phase I).